The primary structure comprises 126 residues: Holo-[acyl-carrier-protein] synthase (126 aa).

2 residues coordinate Mg(2+): Asp9 and Glu58.

Belongs to the P-Pant transferase superfamily. AcpS family. It depends on Mg(2+) as a cofactor.

It localises to the cytoplasm. The catalysed reaction is apo-[ACP] + CoA = holo-[ACP] + adenosine 3',5'-bisphosphate + H(+). Its function is as follows. Transfers the 4'-phosphopantetheine moiety from coenzyme A to a Ser of acyl-carrier-protein. This Aliivibrio fischeri (strain MJ11) (Vibrio fischeri) protein is Holo-[acyl-carrier-protein] synthase.